A 230-amino-acid polypeptide reads, in one-letter code: Ribose-5-phosphate isomerase A (230 aa).

Residues Thr-32–Thr-35, Asp-85–Asp-88, and Lys-98–Gly-101 contribute to the substrate site. The active-site Proton acceptor is Glu-107. Position 125 (Lys-125) interacts with substrate.

Belongs to the ribose 5-phosphate isomerase family. Homodimer.

The enzyme catalyses aldehydo-D-ribose 5-phosphate = D-ribulose 5-phosphate. Its pathway is carbohydrate degradation; pentose phosphate pathway; D-ribose 5-phosphate from D-ribulose 5-phosphate (non-oxidative stage): step 1/1. Catalyzes the reversible conversion of ribose-5-phosphate to ribulose 5-phosphate. This chain is Ribose-5-phosphate isomerase A, found in Burkholderia ambifaria (strain ATCC BAA-244 / DSM 16087 / CCUG 44356 / LMG 19182 / AMMD) (Burkholderia cepacia (strain AMMD)).